The primary structure comprises 92 residues: Cell division topological specificity factor (92 aa).

Belongs to the MinE family.

Functionally, prevents the cell division inhibition by proteins MinC and MinD at internal division sites while permitting inhibition at polar sites. This ensures cell division at the proper site by restricting the formation of a division septum at the midpoint of the long axis of the cell. This Desulforamulus reducens (strain ATCC BAA-1160 / DSM 100696 / MI-1) (Desulfotomaculum reducens) protein is Cell division topological specificity factor.